Consider the following 337-residue polypeptide: Probable allantoicase 1 (337 aa).

It belongs to the allantoicase family.

It catalyses the reaction allantoate + H2O = (S)-ureidoglycolate + urea. It participates in nitrogen metabolism; (S)-allantoin degradation; (S)-ureidoglycolate from allantoate (aminidohydrolase route): step 1/1. The polypeptide is Probable allantoicase 1 (Burkholderia mallei (strain ATCC 23344)).